The chain runs to 321 residues: MKNYARISCTSRYVPENCVTNHQLSEMMDTSDEWIHSRTGISERRIVTQENTSDLCHQVAKQLLEKSGKQASEIDFILVATVTPDFNMPSVACQVQGAIGATEAFAFDISAACSGFVYALSMAEKLVLSGRYQTGLVIGGETFSKMLDWTDRSTAVLFGDGAAGVLIEAAETPHFLNEKLQADGQRWAALTSGYTINESPFYQGHKQASKTLQMEGRSIFDFAIKDVSQNILSLVTDETVDYLLLHQANVRIIDKIARKTKISREKFLTNMDKYGNTSAASIPILLDEAVENGTLILGSQQRVVLTGFGGGLTWGSLLLTL.

Active-site residues include Cys-113 and His-246. An ACP-binding region spans residues 247-251 (QANVR). Asn-276 is a catalytic residue.

Belongs to the thiolase-like superfamily. FabH family. Homodimer.

The protein localises to the cytoplasm. The enzyme catalyses malonyl-[ACP] + acetyl-CoA + H(+) = 3-oxobutanoyl-[ACP] + CO2 + CoA. It functions in the pathway lipid metabolism; fatty acid biosynthesis. Functionally, catalyzes the condensation reaction of fatty acid synthesis by the addition to an acyl acceptor of two carbons from malonyl-ACP. Catalyzes the first condensation reaction which initiates fatty acid synthesis and may therefore play a role in governing the total rate of fatty acid production. Possesses both acetoacetyl-ACP synthase and acetyl transacylase activities. Its substrate specificity determines the biosynthesis of branched-chain and/or straight-chain of fatty acids. This Enterococcus faecalis (strain ATCC 700802 / V583) protein is Beta-ketoacyl-[acyl-carrier-protein] synthase III.